A 430-amino-acid polypeptide reads, in one-letter code: N-lysine methyltransferase SMYD2-A (430 aa).

Positions 5–239 (EGLERFDSPG…AGDEVFTSYI (235 aa)) constitute an SET domain. 15–17 (KGR) serves as a coordination point for S-adenosyl-L-methionine. C50, C53, C63, C66, C72, C76, H84, and C88 together coordinate Zn(2+). Residues 50-88 (CDFCFARKEGLSKCGKCKQAFYCNVDCQKGDWPMHKLEC) form an MYND-type zinc finger. Residues H135, 204 to 205 (NH), and 256 to 258 (YFF) contribute to the S-adenosyl-L-methionine site.

This sequence belongs to the class V-like SAM-binding methyltransferase superfamily.

It localises to the cytoplasm. It is found in the cytosol. The protein localises to the nucleus. It carries out the reaction L-lysyl(4)-[histone H3] + 3 S-adenosyl-L-methionine = N(6),N(6),N(6)-trimethyl-L-lysyl(4)-[histone H3] + 3 S-adenosyl-L-homocysteine + 3 H(+). It catalyses the reaction L-lysyl-[protein] + S-adenosyl-L-methionine = N(6)-methyl-L-lysyl-[protein] + S-adenosyl-L-homocysteine + H(+). In terms of biological role, protein-lysine N-methyltransferase that methylates both histones and non-histone proteins, including p53/TP53 and RB1. Specifically trimethylates histone H3 'Lys-4' (H3K4me3) in vivo. The activity requires interaction with HSP90alpha. Shows even higher methyltransferase activity on p53/TP53. Monomethylates 'Lys-370' of p53/TP53, leading to decreased DNA-binding activity and subsequent transcriptional regulation activity of p53/TP53. Monomethylates RB1 at 'Lys-860'. This chain is N-lysine methyltransferase SMYD2-A (smyd2-a), found in Xenopus laevis (African clawed frog).